The primary structure comprises 1171 residues: Structural maintenance of chromosomes protein 2-2 (1171 aa).

In terms of domain architecture, Zinc-hook spans 2–1158 (HIKEICLEGF…DVLFRTKFVD (1157 aa)). ATP is bound at residue 32–39 (GLNGSGKS). Residues 172–510 (RMYENKKEAA…LANVQFTYRD (339 aa)) are a coiled coil. Positions 518 to 635 (SKVKGVVAKL…KTTDAAKEVA (118 aa)) constitute an SMC hinge domain. Residues 674–1026 (HDLAEAETKF…LDEKKKETLK (353 aa)) adopt a coiled-coil conformation.

The protein belongs to the SMC family. SMC2 subfamily. In terms of assembly, forms a heterodimer with SMC4. Component of the condensin complex, which contains the SMC2 and SMC4 heterodimer, and three non SMC subunits that probably regulate the complex: CAPH, CAPD2 and CAPG. In terms of tissue distribution, highly expressed in roots and young floral buds.

The protein localises to the nucleus. Its function is as follows. Central component of the condensin complex, a complex required for conversion of interphase chromatin into mitotic-like condense chromosomes. The condensin complex probably introduces positive supercoils into relaxed DNA in the presence of type I topoisomerases and converts nicked DNA into positive knotted forms in the presence of type II topoisomerases. Also involved in chromosome segregation in meiosis. In Arabidopsis thaliana (Mouse-ear cress), this protein is Structural maintenance of chromosomes protein 2-2 (SMC2-2).